Here is a 273-residue protein sequence, read N- to C-terminus: Tryptophan synthase alpha chain (273 aa).

Catalysis depends on proton acceptor residues Glu-49 and Asp-60.

This sequence belongs to the TrpA family. Tetramer of two alpha and two beta chains.

It carries out the reaction (1S,2R)-1-C-(indol-3-yl)glycerol 3-phosphate + L-serine = D-glyceraldehyde 3-phosphate + L-tryptophan + H2O. It participates in amino-acid biosynthesis; L-tryptophan biosynthesis; L-tryptophan from chorismate: step 5/5. Functionally, the alpha subunit is responsible for the aldol cleavage of indoleglycerol phosphate to indole and glyceraldehyde 3-phosphate. In Thiobacillus denitrificans (strain ATCC 25259 / T1), this protein is Tryptophan synthase alpha chain.